A 129-amino-acid polypeptide reads, in one-letter code: Antileukoproteinase (129 aa).

The signal sequence occupies residues glycine 1–glycine 22. WAP domains are found at residues asparagine 25–valine 73 and valine 79–valine 127. Intrachain disulfides connect cysteine 32-cysteine 61, cysteine 40-cysteine 65, cysteine 48-cysteine 60, cysteine 54-cysteine 69, cysteine 86-cysteine 115, cysteine 93-cysteine 119, cysteine 102-cysteine 114, and cysteine 108-cysteine 123. Positions valine 81–alanine 129 are elastase inhibitory domain.

Interacts with GRN; interaction protects progranulin from proteolysis. Found in pregnant endometrium and myometrium, placenta, allantoic fluids, fetal cord blood, and fetal liver. Also found in uterus and lung.

Its subcellular location is the secreted. Acid-stable proteinase inhibitor with strong affinities for trypsin, chymotrypsin, elastase, and cathepsin G. Modulates the inflammatory and immune responses after bacterial infection, and after infection by the intracellular parasite L.major. Down-regulates responses to bacterial lipopolysaccharide (LPS). Plays a role in regulating the activation of NF-kappa-B and inflammatory responses. Has antimicrobial activity against mycobacteria, but not against salmonella. Contributes to normal resistance against infection by M.tuberculosis. Required for normal resistance to infection by L.major. Required for normal wound healing, probably by preventing tissue damage by limiting protease activity. Together with ELANE, required for normal differentiation and proliferation of bone marrow myeloid cells. The chain is Antileukoproteinase (SLPI) from Sus scrofa (Pig).